The sequence spans 531 residues: Putative cysteine ligase BshC (531 aa).

Residues 447–481 (KAQEKKQTKGLDNLEKRLLKAEKKMHSEKLKKIIE) are a coiled coil.

This sequence belongs to the BshC family.

This Flavobacterium psychrophilum (strain ATCC 49511 / DSM 21280 / CIP 103535 / JIP02/86) protein is Putative cysteine ligase BshC.